The sequence spans 356 residues: Tetraacyldisaccharide 4'-kinase (356 aa).

Position 67-74 (67-74 (FVGGTGKT)) interacts with ATP.

The protein belongs to the LpxK family.

It catalyses the reaction a lipid A disaccharide + ATP = a lipid IVA + ADP + H(+). The protein operates within glycolipid biosynthesis; lipid IV(A) biosynthesis; lipid IV(A) from (3R)-3-hydroxytetradecanoyl-[acyl-carrier-protein] and UDP-N-acetyl-alpha-D-glucosamine: step 6/6. Its function is as follows. Transfers the gamma-phosphate of ATP to the 4'-position of a tetraacyldisaccharide 1-phosphate intermediate (termed DS-1-P) to form tetraacyldisaccharide 1,4'-bis-phosphate (lipid IVA). This is Tetraacyldisaccharide 4'-kinase from Herminiimonas arsenicoxydans.